The primary structure comprises 467 residues: tRNA-2-methylthio-N(6)-dimethylallyladenosine synthase (467 aa).

The MTTase N-terminal domain maps to 15 to 135; sequence KKIFVKTYGC…LPEYVARLAN (121 aa). [4Fe-4S] cluster contacts are provided by C24, C60, C98, C177, C181, and C184. The Radical SAM core domain occupies 163–395; it reads LARGATAFLT…QALLGEQQLA (233 aa). A TRAM domain is found at 398–461; it reads AGCAGRTMPV…RNSLRGRLRE (64 aa).

Belongs to the methylthiotransferase family. MiaB subfamily. Monomer. [4Fe-4S] cluster is required as a cofactor.

The protein localises to the cytoplasm. It carries out the reaction N(6)-dimethylallyladenosine(37) in tRNA + (sulfur carrier)-SH + AH2 + 2 S-adenosyl-L-methionine = 2-methylsulfanyl-N(6)-dimethylallyladenosine(37) in tRNA + (sulfur carrier)-H + 5'-deoxyadenosine + L-methionine + A + S-adenosyl-L-homocysteine + 2 H(+). Catalyzes the methylthiolation of N6-(dimethylallyl)adenosine (i(6)A), leading to the formation of 2-methylthio-N6-(dimethylallyl)adenosine (ms(2)i(6)A) at position 37 in tRNAs that read codons beginning with uridine. This chain is tRNA-2-methylthio-N(6)-dimethylallyladenosine synthase, found in Parvibaculum lavamentivorans (strain DS-1 / DSM 13023 / NCIMB 13966).